An 879-amino-acid polypeptide reads, in one-letter code: mRNA-binding protein PUF3 (879 aa).

Phosphothreonine is present on Thr83. 2 positions are modified to phosphoserine: Ser207 and Ser210. Disordered regions lie at residues 222-256 (ESDK…LESE), 344-417 (PANE…QQQQ), and 443-512 (KKRN…QQTY). The segment covering 237 to 255 (SGSLYHSSSNSGSSASLES) has biased composition (low complexity). Residues 370 to 395 (SSPPNNSPFPFAYPNPMMFMPPPPLS) are compositionally biased toward pro residues. Composition is skewed to low complexity over residues 398-417 (QQQQ…QQQQ), 449-463 (NHPA…KQAN), 472-491 (TKNT…TANN), and 501-512 (HSQSLQQQQQTY). The PUM-HD domain maps to 513-871 (HRSPLLEQLR…RHLASVEKLA (359 aa)). 8 Pumilio repeats span residues 538 to 573 (DIFG…VIFN), 574 to 609 (EIRD…TLVD), 610 to 645 (QFKG…ELVL), 646 to 681 (ELSD…FILS), 682 to 717 (SLTG…SILN), 718 to 759 (ELKD…EIIE), 760 to 795 (TVAN…LIIS), and 807 to 844 (NLED…LIVI).

This sequence belongs to the PUF3 family.

The protein resides in the mitochondrion outer membrane. It localises to the cytoplasm. Functionally, RNA-binding protein involved in post-transcriptional regulation. Negatively regulates expression of COX17 by binding to the 3'-UTR of COX17 mRNA. Promotes decay of COX17 mRNA by enhancing its rate of deadenylation and subsequent turnover. Predominantly binds to mRNAs encoding mitochondrial proteins and localizes them to the vicinity of mitochondria for translation. Regulates mitochondrial biogenesis, motility and morphology. The sequence is that of mRNA-binding protein PUF3 (PUF3) from Saccharomyces cerevisiae (strain ATCC 204508 / S288c) (Baker's yeast).